The following is a 177-amino-acid chain: Centromere protein R (177 aa).

Residue K8 forms a Glycyl lysine isopeptide (Lys-Gly) (interchain with G-Cter in SUMO2) linkage. The short motif at 9–13 (LDGLL) is the LXXLL motif element. The residue at position 17 (S17) is a Phosphoserine. A DD1 region spans residues 20-50 (PSKITRKKSVITYSPTTGTCQMSLFASPTSS). K22 participates in a covalent cross-link: Glycyl lysine isopeptide (Lys-Gly) (interchain with G-Cter in SUMO2). S28 is modified (phosphoserine). Residues 41 to 50 (MSLFASPTSS) are compositionally biased toward polar residues. The tract at residues 41-81 (MSLFASPTSSEEQKHRNGLSNEKRKKLNHPSLTESKESTTK) is disordered. The short motif at 63–66 (KRKK) is the Nuclear localization signal element. The residue at position 71 (S71) is a Phosphoserine. A coiled-coil region spans residues 83–113 (NDEFMMLLSKVEKLSEEIMEIMQNLSSIQAL). The short motif at 172-176 (LKAIL) is the LXXIL motif element.

Homodimer; mediated by the coiled coil domain. Isoform 3, but not other isoforms, interacts with the cytoplasmic tail of integrin ITGB3. The relevance of the interaction with ITGB3 is however uncertain, since isoform 3 is mainly nuclear. Interacts with CCNA2 and MTA1. Interacts with NFKB1 NF-kappa-B subunit. Component of the CENPA-CAD complex, composed of CENPI, CENPK, CENPL, CENPO, CENPP, CENPQ, CENPR and CENPS. The CENPA-CAD complex interacts with the CENPA-NAC complex, at least composed of CENPA, CENPC, CENPH, CENPM, CENPN, CENPT and CENPU. Interacts with TASOR. Widely expressed. Expressed in spleen, thymus, prostate, ovary, small intestine and white blood cells. Highly expressed in testis and colon. Isoform 4 is expressed in platelets, lymphocytes and granulocytes.

Its subcellular location is the nucleus. It is found in the chromosome. The protein localises to the centromere. The protein resides in the kinetochore. It localises to the cytoplasm. Transcription coregulator that can have both coactivator and corepressor functions. Isoform 1, but not other isoforms, is involved in the coactivation of nuclear receptors for retinoid X (RXRs) and thyroid hormone (TRs) in a ligand-dependent fashion. In contrast, it does not coactivate nuclear receptors for retinoic acid, vitamin D, progesterone receptor, nor glucocorticoid. Acts as a coactivator for estrogen receptor alpha. Acts as a transcriptional corepressor via its interaction with the NFKB1 NF-kappa-B subunit, possibly by interfering with the transactivation domain of NFKB1. Induces apoptosis in breast cancer cells, but not in other cancer cells, via a caspase-2 mediated pathway that involves mitochondrial membrane permeabilization but does not require other caspases. May also act as an inhibitor of cyclin A-associated kinase. Also acts a component of the CENPA-CAD (nucleosome distal) complex, a complex recruited to centromeres which is involved in assembly of kinetochore proteins, mitotic progression and chromosome segregation. May be involved in incorporation of newly synthesized CENPA into centromeres via its interaction with the CENPA-NAC complex. This is Centromere protein R (ITGB3BP) from Homo sapiens (Human).